The primary structure comprises 563 residues: Rhotekin (563 aa).

At arginine 14 the chain carries Omega-N-methylarginine. The 82-residue stretch at 17–98 folds into the REM-1 domain; sequence ALEMEFKRGR…LQRRKEAQVL (82 aa). Phosphoserine occurs at positions 30 and 106. Residues 96 to 116 form a disordered region; the sequence is QVLGKTSRRPSDSGPPAERSP. Asymmetric dimethylarginine is present on arginine 230. Serine 232 carries the phosphoserine modification. The PH domain maps to 309–416; it reads QPTASGTLRV…WMEALWQLFF (108 aa). The disordered stretch occupies residues 518 to 563; the sequence is TFSLDAVPPDHSPRARSVAPLPPQRSPRTRGLCSKGQPRTWLQSPV. Residues serine 520, serine 529, and serine 543 each carry the phosphoserine modification.

Interacts via its C-terminal region with the TAX1BP3 PDZ domain. This interaction facilitates Rho-mediated activation of the c-Fos serum response element (SRE). Interacts with SEPT9. Specifically binds to GTP-bound RHOA, RHOB and RHOC and inhibits their GTPase activity. Highly expressed in prostate, moderately in kidney, heart, brain, spleen, testis, placenta, small intestine, pancreas, skeletal muscle and peripheral blood leukocytes, and weakly in ovary, colon and thymus. Weakly expressed in all normal cell lines tested. Overexpressed in various cancer cell lines.

In terms of biological role, mediates Rho signaling to activate NF-kappa-B and may confer increased resistance to apoptosis to cells in gastric tumorigenesis. May play a novel role in the organization of septin structures. This is Rhotekin from Homo sapiens (Human).